The following is a 445-amino-acid chain: UPF0210 protein SPG_0223 (445 aa).

The protein belongs to the UPF0210 family. In terms of assembly, homodimer.

The protein is UPF0210 protein SPG_0223 of Streptococcus pneumoniae serotype 19F (strain G54).